The chain runs to 746 residues: Alpha-1,4-glucan:maltose-1-phosphate maltosyltransferase (746 aa).

A disordered region spans residues 1 to 43 (MAAVQHRATTRTSNTDNSTTKTKSKATSARKSPATKRKRVSAE). Residues 10-32 (TRTSNTDNSTTKTKSKATSARKS) show a composition bias toward low complexity. 3 residues coordinate alpha-maltose 1-phosphate: Lys343, Gln403, and Asp438. The Nucleophile role is filled by Asp473. Residue Asn474 coordinates alpha-maltose 1-phosphate. Residue Glu502 is the Proton donor of the active site. 612 to 613 (KY) contributes to the alpha-maltose 1-phosphate binding site.

This sequence belongs to the glycosyl hydrolase 13 family. GlgE subfamily. Homodimer.

It catalyses the reaction alpha-maltose 1-phosphate + [(1-&gt;4)-alpha-D-glucosyl](n) = [(1-&gt;4)-alpha-D-glucosyl](n+2) + phosphate. In terms of biological role, maltosyltransferase that uses maltose 1-phosphate (M1P) as the sugar donor to elongate linear or branched alpha-(1-&gt;4)-glucans. Is involved in a branched alpha-glucan biosynthetic pathway from trehalose, together with TreS, Mak and GlgB. The protein is Alpha-1,4-glucan:maltose-1-phosphate maltosyltransferase of Bifidobacterium longum (strain NCC 2705).